A 181-amino-acid chain; its full sequence is Ion-translocating oxidoreductase complex subunit B (181 aa).

The interval 1–26 (MLEAVSAVMSLGGMALFAGLGLGYAA) is hydrophobic. The 4Fe-4S domain maps to 32–90 (EADPVVEKLEALLPATNCGMCGHPGCGPYAQAITEGEAINLCTPGGKAVMESIAAMLGV). Cys49, Cys52, Cys57, Cys73, Cys110, Cys113, Cys116, Cys120, Cys140, Cys143, Cys146, and Cys150 together coordinate [4Fe-4S] cluster. 2 consecutive 4Fe-4S ferredoxin-type domains span residues 101 to 130 (KVAYIDEEACIGCTACIKVCPVDAIVGANK) and 131 to 160 (QSHTVIVAECTSCQLCLEPCPTDCITMQPV).

The protein belongs to the 4Fe4S bacterial-type ferredoxin family. RnfB subfamily. As to quaternary structure, the complex is composed of six subunits: RnfA, RnfB, RnfC, RnfD, RnfE and RnfG. [4Fe-4S] cluster serves as cofactor.

It localises to the cell inner membrane. In terms of biological role, part of a membrane-bound complex that couples electron transfer with translocation of ions across the membrane. This chain is Ion-translocating oxidoreductase complex subunit B, found in Magnetococcus marinus (strain ATCC BAA-1437 / JCM 17883 / MC-1).